The chain runs to 106 residues: Pyrimidine/purine nucleoside phosphorylase (106 aa).

This sequence belongs to the nucleoside phosphorylase PpnP family.

It carries out the reaction a purine D-ribonucleoside + phosphate = a purine nucleobase + alpha-D-ribose 1-phosphate. It catalyses the reaction adenosine + phosphate = alpha-D-ribose 1-phosphate + adenine. The enzyme catalyses cytidine + phosphate = cytosine + alpha-D-ribose 1-phosphate. The catalysed reaction is guanosine + phosphate = alpha-D-ribose 1-phosphate + guanine. It carries out the reaction inosine + phosphate = alpha-D-ribose 1-phosphate + hypoxanthine. It catalyses the reaction thymidine + phosphate = 2-deoxy-alpha-D-ribose 1-phosphate + thymine. The enzyme catalyses uridine + phosphate = alpha-D-ribose 1-phosphate + uracil. The catalysed reaction is xanthosine + phosphate = alpha-D-ribose 1-phosphate + xanthine. Its function is as follows. Catalyzes the phosphorolysis of diverse nucleosides, yielding D-ribose 1-phosphate and the respective free bases. Can use uridine, adenosine, guanosine, cytidine, thymidine, inosine and xanthosine as substrates. Also catalyzes the reverse reactions. The sequence is that of Pyrimidine/purine nucleoside phosphorylase from Burkholderia multivorans (strain ATCC 17616 / 249).